The following is a 492-amino-acid chain: 2-succinylbenzoate--CoA ligase (492 aa).

It belongs to the ATP-dependent AMP-binding enzyme family. MenE subfamily.

The enzyme catalyses 2-succinylbenzoate + ATP + CoA = 2-succinylbenzoyl-CoA + AMP + diphosphate. Its pathway is quinol/quinone metabolism; 1,4-dihydroxy-2-naphthoate biosynthesis; 1,4-dihydroxy-2-naphthoate from chorismate: step 5/7. It participates in quinol/quinone metabolism; menaquinone biosynthesis. In terms of biological role, converts 2-succinylbenzoate (OSB) to 2-succinylbenzoyl-CoA (OSB-CoA). In Staphylococcus aureus (strain bovine RF122 / ET3-1), this protein is 2-succinylbenzoate--CoA ligase.